The sequence spans 462 residues: Serine carboxypeptidase-like 28 (462 aa).

Positions 1–26 (MMITKKLYQCMCLLCMVIALLDVVSS) are cleaved as a signal peptide. Residues Asn49 and Asn144 are each glycosylated (N-linked (GlcNAc...) asparagine). Disulfide bonds link Cys93-Cys342, Cys254-Cys266, and Cys290-Cys311. Residue Ser186 is part of the active site. A glycan (N-linked (GlcNAc...) asparagine) is linked at Asn256. The N-linked (GlcNAc...) asparagine glycan is linked to Asn334. Catalysis depends on residues Asp379 and His434. Asn454 carries an N-linked (GlcNAc...) asparagine glycan.

The protein belongs to the peptidase S10 family. In terms of tissue distribution, expressed in seedlings, roots and senescent leaves.

It localises to the secreted. Its function is as follows. Probable carboxypeptidase. The chain is Serine carboxypeptidase-like 28 (SCPL28) from Arabidopsis thaliana (Mouse-ear cress).